Here is a 178-residue protein sequence, read N- to C-terminus: CASP-like protein 5B1 (178 aa).

Topologically, residues 1–37 (MDASNPIVHPIGDHHAVDLEEGPLIVTMKELPGMPGT) are cytoplasmic. The helical transmembrane segment at 38 to 58 (IGGLALRVGQFLFAAAAIVIM) threads the bilayer. At 59–69 (VTGDEFTNYTA) the chain is on the extracellular side. Asparagine 66 carries N-linked (GlcNAc...) asparagine glycosylation. The helical transmembrane segment at 70-90 (FCYLVAAMSLQFLWSFMLAIL) threads the bilayer. Residues 91 to 104 (DTYALLIKRGLRNS) lie on the Cytoplasmic side of the membrane. A helical membrane pass occupies residues 105–125 (VLLSLFVVGDWVTATLSLAAA). The Extracellular portion of the chain corresponds to 126–154 (CSTAGVTVLFDNDLNYCGQMHCHRYQLSA). The helical transmembrane segment at 155–175 (AMAFLSWLLIGMSSLLTFWLW) threads the bilayer. Topologically, residues 176 to 178 (ASE) are cytoplasmic.

The protein belongs to the Casparian strip membrane proteins (CASP) family. Homodimer and heterodimers.

The protein localises to the cell membrane. The protein is CASP-like protein 5B1 of Ginkgo biloba (Ginkgo).